The following is a 270-amino-acid chain: Putative pyruvate, phosphate dikinase regulatory protein (270 aa).

148-155 (GISRTSKT) provides a ligand contact to ADP.

Belongs to the pyruvate, phosphate/water dikinase regulatory protein family. PDRP subfamily.

The catalysed reaction is N(tele)-phospho-L-histidyl/L-threonyl-[pyruvate, phosphate dikinase] + ADP = N(tele)-phospho-L-histidyl/O-phospho-L-threonyl-[pyruvate, phosphate dikinase] + AMP + H(+). It catalyses the reaction N(tele)-phospho-L-histidyl/O-phospho-L-threonyl-[pyruvate, phosphate dikinase] + phosphate + H(+) = N(tele)-phospho-L-histidyl/L-threonyl-[pyruvate, phosphate dikinase] + diphosphate. In terms of biological role, bifunctional serine/threonine kinase and phosphorylase involved in the regulation of the pyruvate, phosphate dikinase (PPDK) by catalyzing its phosphorylation/dephosphorylation. In Bacillus cereus (strain AH187), this protein is Putative pyruvate, phosphate dikinase regulatory protein.